The sequence spans 1487 residues: Collagen alpha-1(II) chain (1487 aa).

A signal peptide spans 1 to 25; it reads MIRLGAPQTLVLLTLLVAAVLRCHG. The propeptide at 26–181 is N-terminal propeptide; it reads QDVQKAGSCV…PPGLGGNFAA (156 aa). The region spanning 32–90 is the VWFC domain; it reads GSCVQDGQRYNDKDVWKPEPCRICVCDTGTVLCDDIICEDMKDCLSPETPFGECCPICS. Residues 96-1234 are disordered; it reads ASGQPGPKGQ…GLGQREKGPD (1139 aa). Basic and acidic residues-rich tracts occupy residues 105–116 and 133–154; these read QKGEPGDIKDIV and PRGD…RDGE. The span at 158-173 shows a compositional bias: pro residues; that stretch reads PGNPGPPGPPGPPGPP. The residue at position 190 (lysine 190) is a 5-hydroxylysine. Lysine 190 is a glycosylation site (O-linked (Gal...) hydroxylysine). Over residues 192–203 the composition is skewed to low complexity; that stretch reads GGAQMGVMQGPM. A triple-helical region region spans residues 201-1214; it reads GPMGPMGPRG…PGPPGPPGPP (1014 aa). A compositionally biased stretch (pro residues) spans 208–217; sequence PRGPPGPAGA. Residues proline 212, proline 218, proline 230, proline 233, proline 245, proline 248, proline 251, proline 260, proline 269, proline 278, proline 281, and proline 284 each carry the hydroxyproline modification. The segment covering 218–239 has biased composition (low complexity); the sequence is PGPQGFQGNPGEPGEPGVSGPM. Residues 241-250 are compositionally biased toward pro residues; the sequence is PRGPPGPPGK. A compositionally biased stretch (basic and acidic residues) spans 251-265; it reads PGDDGEAGKPGKSGE. Residue lysine 287 is modified to 5-hydroxylysine. The O-linked (Gal...) hydroxylysine glycan is linked to lysine 287. Proline 293 is modified (hydroxyproline). A 5-hydroxylysine modification is found at lysine 299. O-linked (Gal...) hydroxylysine glycosylation occurs at lysine 299. Proline 305 carries the post-translational modification Hydroxyproline. Lysine 308 is subject to 5-hydroxylysine. Lysine 308 is a glycosylation site (O-linked (Gal...) hydroxylysine). The segment covering 310 to 320 has biased composition (low complexity); that stretch reads ESGSPGENGSP. 8 positions are modified to hydroxyproline: proline 314, proline 320, proline 329, proline 350, proline 356, proline 365, proline 368, and proline 371. The span at 335–350 shows a compositional bias: low complexity; sequence TGPAGAAGARGNDGQP. Gly residues predominate over residues 360-369; sequence GPAGGPGFPG. Low complexity-rich tracts occupy residues 370–382 and 391–431; these read APGA…PTGA and PRGE…AGAP. Position 374 is a 5-hydroxylysine (lysine 374). An O-linked (Gal...) hydroxylysine glycan is attached at lysine 374. 5 positions are modified to hydroxyproline: proline 395, proline 398, proline 401, proline 410, and proline 416. At lysine 419 the chain carries 5-hydroxylysine. 4 positions are modified to hydroxyproline: proline 425, proline 431, proline 434, and proline 440. Residues 433 to 442 show a composition bias toward pro residues; that stretch reads FPGPRGPPGP. Lysine 452 is modified (5-hydroxylysine). Hydroxyproline is present on proline 458. Lysine 464 and lysine 470 each carry 5-hydroxylysine. A hydroxyproline mark is found at proline 473, proline 482, proline 497, proline 506, proline 512, and proline 518. A 5-hydroxylysine modification is found at lysine 527. Proline 530 carries the hydroxyproline modification. Lysine 542 carries the 5-hydroxylysine modification. Proline 551, proline 557, proline 566, proline 581, proline 587, proline 590, proline 599, and proline 605 each carry hydroxyproline. 5-hydroxylysine is present on lysine 608. O-linked (Gal...) hydroxylysine glycosylation is present at lysine 608. Proline 614 is modified (hydroxyproline). Position 620 is a 5-hydroxylysine (lysine 620). O-linked (Gal...) hydroxylysine glycosylation occurs at lysine 620. Positions 622-631 are enriched in low complexity; the sequence is LPGAPGLRGL. Residues proline 623, proline 626, proline 632, proline 644, proline 659, and proline 668 each carry the hydroxyproline modification. The segment covering 656–667 has biased composition (low complexity); that stretch reads QGAPGPSGFQGL. A 3-hydroxyproline modification is found at proline 670. Residues proline 671 and proline 674 each carry the hydroxyproline modification. Low complexity predominate over residues 721–736; the sequence is LPGTPGTDGPKGAAGP. Residues 764 to 775 are compositionally biased toward basic and acidic residues; sequence KGDRGDVGEKGP. Low complexity-rich tracts occupy residues 833–848 and 877–913; these read AGFA…PGAK and PTGV…SNGN. The residue at position 907 (proline 907) is a 3-hydroxyproline. Proline 908, proline 914, and proline 920 each carry 4-hydroxyproline. The span at 1069-1079 shows a compositional bias: pro residues; sequence APGPPGSPGPA. Positions 1091–1109 are enriched in low complexity; the sequence is AGAQGPMGPAGPAGARGMP. The span at 1115–1129 shows a compositional bias: basic and acidic residues; sequence RGDKGETGEAGERGL. The residue at position 1130 (lysine 1130) is a 5-hydroxylysine. O-linked (Gal...) hydroxylysine glycosylation occurs at lysine 1130. The residue at position 1144 (proline 1144) is a 3-hydroxyproline. Residues 1148–1157 show a composition bias toward low complexity; that stretch reads SGDQGASGPA. Position 1181 is a 4-hydroxyproline (proline 1181). Proline 1186 bears the 3-hydroxyproline mark. Proline 1187 carries the post-translational modification 4-hydroxyproline. Residues 1199–1216 show a composition bias toward pro residues; that stretch reads AGPPGNPGPPGPPGPPGP. Proline 1201 carries the 3-hydroxyproline modification. A 4-hydroxyproline mark is found at proline 1202 and proline 1205. 3-hydroxyproline is present on proline 1207. Residues proline 1208 and proline 1211 each carry the 4-hydroxyproline modification. At proline 1213 the chain carries 3-hydroxyproline. The residue at position 1214 (proline 1214) is a 4-hydroxyproline. Positions 1215–1241 are nonhelical region (C-terminal); sequence GPGIDMSAFAGLGQREKGPDPLQYMRA. In terms of domain architecture, Fibrillar collagen NC1 spans 1253–1487; the sequence is AEVDATLKSL…GVDIGPVCFL (235 aa). Cystine bridges form between cysteine 1283/cysteine 1315, cysteine 1323/cysteine 1485, and cysteine 1393/cysteine 1438. 5 residues coordinate Ca(2+): aspartate 1301, asparagine 1303, glutamine 1304, cysteine 1306, and aspartate 1309. Asparagine 1388 carries an N-linked (GlcNAc...) asparagine glycan.

This sequence belongs to the fibrillar collagen family. In terms of assembly, homotrimers of alpha 1(II) chains. Probably 3-hydroxylated on prolines by LEPREL1. Proline residues at the third position of the tripeptide repeating unit (G-X-P) are hydroxylated in some or all of the chains. Proline residues at the second position of the tripeptide repeating unit (G-P-X) are hydroxylated in some of the chains. In terms of processing, O-linked glycans consist of Glc-Gal disaccharides bound to the oxygen atom of post-translationally added hydroxyl groups. Post-translationally, contains mostly 4-hydroxyproline. Prolines at the third position of the tripeptide repeating unit (G-X-P) are 4-hydroxylated in some or all of the chains. Contains 3-hydroxyproline at a few sites. This modification occurs on the first proline residue in the sequence motif Gly-Pro-Hyp, where Hyp is 4-hydroxyproline. In terms of processing, lysine residues at the third position of the tripeptide repeating unit (G-X-Y) are 5-hydroxylated in some or all of the chains. Post-translationally, O-glycosylated on hydroxylated lysine residues. The O-linked glycan consists of a Glc-Gal disaccharide.

It is found in the secreted. The protein localises to the extracellular space. Its subcellular location is the extracellular matrix. Type II collagen is specific for cartilaginous tissues. It is essential for the normal embryonic development of the skeleton, for linear growth and for the ability of cartilage to resist compressive forces. The polypeptide is Collagen alpha-1(II) chain (Bos taurus (Bovine)).